A 258-amino-acid chain; its full sequence is Isoprenyl transferase 2 (258 aa).

Over residues methionine 1–leucine 18 the composition is skewed to pro residues. The segment at methionine 1–glutamine 21 is disordered. Aspartate 32 is a catalytic residue. Aspartate 32 serves as a coordination point for Mg(2+). Substrate is bound by residues glycine 33 to arginine 36, tryptophan 37, arginine 45, histidine 49, and serine 77 to glutamate 79. The active-site Proton acceptor is asparagine 80. Substrate contacts are provided by residues tryptophan 81, arginine 83, arginine 200, and arginine 206–serine 208. Position 219 (glutamate 219) interacts with Mg(2+).

It belongs to the UPP synthase family. Homodimer. It depends on Mg(2+) as a cofactor.

Its function is as follows. Catalyzes the condensation of isopentenyl diphosphate (IPP) with allylic pyrophosphates generating different type of terpenoids. The polypeptide is Isoprenyl transferase 2 (Nostoc sp. (strain PCC 7120 / SAG 25.82 / UTEX 2576)).